The primary structure comprises 265 residues: Glutamate racemase (265 aa).

Substrate is bound by residues 9–10 (DS) and 41–42 (YG). Residue C72 is the Proton donor/acceptor of the active site. A substrate-binding site is contributed by 73–74 (NT). The active-site Proton donor/acceptor is the C183. 184–185 (TH) serves as a coordination point for substrate.

It belongs to the aspartate/glutamate racemases family.

It catalyses the reaction L-glutamate = D-glutamate. It participates in cell wall biogenesis; peptidoglycan biosynthesis. Provides the (R)-glutamate required for cell wall biosynthesis. The chain is Glutamate racemase from Lysinibacillus sphaericus (Bacillus sphaericus).